We begin with the raw amino-acid sequence, 159 residues long: Oleosin Cor a 12 (159 aa).

Polar residues predominate over residues 1–10; sequence MADRPQQLQV. The disordered stretch occupies residues 1–24; that stretch reads MADRPQQLQVHPQRGHGHYEGGIK. A run of 3 helical transmembrane segments spans residues 45–65, 70–90, and 92–112; these read VGGT…IGLL, LFII…LAVA, and FLSS…VLNY.

It belongs to the oleosin family. As to expression, expressed in seeds.

The protein resides in the lipid droplet. It localises to the membrane. Its function is as follows. May have a structural role to stabilize the lipid body during desiccation of the seed by preventing coalescence of the oil. Probably interacts with both lipid and phospholipid moieties of lipid bodies. May also provide recognition signals for specific lipase anchorage in lipolysis during seedling growth. This chain is Oleosin Cor a 12, found in Corylus avellana (European hazel).